The primary structure comprises 104 residues: Urease subunit beta (104 aa).

Belongs to the urease beta subunit family. In terms of assembly, heterotrimer of UreA (gamma), UreB (beta) and UreC (alpha) subunits. Three heterotrimers associate to form the active enzyme.

The protein localises to the cytoplasm. It carries out the reaction urea + 2 H2O + H(+) = hydrogencarbonate + 2 NH4(+). Its pathway is nitrogen metabolism; urea degradation; CO(2) and NH(3) from urea (urease route): step 1/1. This chain is Urease subunit beta, found in Rhodopseudomonas palustris (strain BisB5).